The primary structure comprises 263 residues: Type III pantothenate kinase (263 aa).

Residue 6 to 13 coordinates ATP; sequence DVGNTNIK. 108–111 is a substrate binding site; that stretch reads GSDR. Asp110 (proton acceptor) is an active-site residue. Asp131 is a K(+) binding site. ATP is bound at residue Thr134. Thr187 lines the substrate pocket.

It belongs to the type III pantothenate kinase family. As to quaternary structure, homodimer. It depends on NH4(+) as a cofactor. K(+) is required as a cofactor.

Its subcellular location is the cytoplasm. The enzyme catalyses (R)-pantothenate + ATP = (R)-4'-phosphopantothenate + ADP + H(+). The protein operates within cofactor biosynthesis; coenzyme A biosynthesis; CoA from (R)-pantothenate: step 1/5. In terms of biological role, catalyzes the phosphorylation of pantothenate (Pan), the first step in CoA biosynthesis. The protein is Type III pantothenate kinase of Anaplasma phagocytophilum (strain HZ).